We begin with the raw amino-acid sequence, 125 residues long: Small ribosomal subunit protein uS12m (125 aa).

Belongs to the universal ribosomal protein uS12 family. Component of the mitochondrial ribosome small subunit.

It is found in the mitochondrion. In terms of biological role, protein S12 is involved in the translation initiation step. This Arabidopsis thaliana (Mouse-ear cress) protein is Small ribosomal subunit protein uS12m (RPS12).